The following is a 324-amino-acid chain: UDP-N-acetylenolpyruvoylglucosamine reductase (324 aa).

Positions phenylalanine 36–glutamate 203 constitute an FAD-binding PCMH-type domain. The active site involves arginine 183. The active-site Proton donor is the serine 232. Glutamate 302 is a catalytic residue.

Belongs to the MurB family. Requires FAD as cofactor.

It is found in the cytoplasm. It carries out the reaction UDP-N-acetyl-alpha-D-muramate + NADP(+) = UDP-N-acetyl-3-O-(1-carboxyvinyl)-alpha-D-glucosamine + NADPH + H(+). It functions in the pathway cell wall biogenesis; peptidoglycan biosynthesis. Functionally, cell wall formation. The sequence is that of UDP-N-acetylenolpyruvoylglucosamine reductase from Rhizobium johnstonii (strain DSM 114642 / LMG 32736 / 3841) (Rhizobium leguminosarum bv. viciae).